We begin with the raw amino-acid sequence, 1016 residues long: Rho family-interacting cell polarization regulator 2 (1016 aa).

2 positions are modified to phosphoserine: Ser21 and Ser37. The segment at 44 to 73 (AVKKPQAKLKKMHNLGHKNSSPPKEPQPKR) is disordered. Positions 48–59 (PQAKLKKMHNLG) are enriched in basic residues. The segment at 55 to 113 (MHNLGHKNSSPPKEPQPKRVEEVYRALKNGLDEYLEVHQTELDKLTTQLKDMRRNSRLG) is involved in cell filopodia formation. A coiled-coil region spans residues 85–112 (LDEYLEVHQTELDKLTTQLKDMRRNSRL). A Phosphoserine modification is found at Ser341. Positions 414-428 (TSTELPPGSQSSQNE) are enriched in polar residues. The disordered stretch occupies residues 414–469 (TSTELPPGSQSSQNEGLKDSSSASCSSSSREGSEPRPHPEGETQGLGKPEGCPVAT). A compositionally biased stretch (low complexity) spans 433–442 (SSSASCSSSS). Basic and acidic residues predominate over residues 444–454 (EGSEPRPHPEG). A phosphoserine mark is found at Ser520 and Ser532. The disordered stretch occupies residues 636–656 (DSVFSDTETEKNSYRSVHPEA). Positions 643–656 (ETEKNSYRSVHPEA) are enriched in basic and acidic residues.

It belongs to the RIPOR family. In terms of assembly, homooligomer; homooligomerization is regulated by RHOC and leads to the formation of concatemers through the association of N- and C-termini. Interacts (phosphorylated form) with 14-3-3 proteins; these interactions occur during myogenic cell differentiation and also induces T cell proliferation arrest. Interacts (phosphorylated form) with HDAC6; this interaction occurs during early myogenic differentiation, prevents HDAC6 to deacetylate tubulin and also induces T cell proliferation arrest. Interacts with DYSF; this interaction occurs during early myogenic differentiation. Interacts with MYOF. Interacts (via active GTP- or inactive GDP-bound forms) with RHOA; this interaction is direct, blocks the loading of GTP to RHOA and decreases upon chemokine CCL19 stimulation in primary T lymphocytes. Interacts with RHOC. Interacts (via phosphorylated form) with YWHAB; this interaction occurs in a chemokine-dependent manner and does not compete for binding of RIPOR2 with RHOA nor blocks inhibition of RIPOR2-mediated RHOA activity. Interacts with YWHAE. Interacts with YWHAQ. Phosphorylated. Chemokine-induced phosphorylation in neutrophils occurs in a PKC- and AKT-dependent manner, resulting in RIPOR2 interaction with YWHAB and stabilization. Phosphorylated by PKCA, AKT1 and MAPKAPK1A; in vitro.

The protein localises to the cytoplasm. The protein resides in the cytoskeleton. Its subcellular location is the cell projection. It localises to the filopodium. It is found in the apical cell membrane. The protein localises to the stereocilium. The protein resides in the stereocilium membrane. Its function is as follows. Acts as an inhibitor of the small GTPase RHOA and plays several roles in the regulation of myoblast and hair cell differentiation, lymphocyte T proliferation and neutrophil polarization. Plays a role in fetal mononuclear myoblast differentiation by promoting filopodia and myotube formation. Maintains naive T lymphocytes in a quiescent state and prevents chemokine-induced T lymphocyte responses, such as cell adhesion, polarization and migration. Involved also in the regulation of neutrophil polarization, chemotaxis and adhesion. Required for normal development of inner and outer hair cell stereocilia within the cochlea of the inner ear. Plays a role for maintaining the structural organization of the basal domain of stereocilia. Involved in mechanosensory hair cell function. Required for normal hearing. This Bos taurus (Bovine) protein is Rho family-interacting cell polarization regulator 2.